Consider the following 169-residue polypeptide: Inorganic pyrophosphatase (169 aa).

The substrate site is built by K26, R40, and Y52. Mg(2+) contacts are provided by D62, D67, and D99. Y138 is a substrate binding site.

This sequence belongs to the PPase family. In terms of assembly, homohexamer. It depends on Mg(2+) as a cofactor.

Its subcellular location is the cytoplasm. It carries out the reaction diphosphate + H2O = 2 phosphate + H(+). Catalyzes the hydrolysis of inorganic pyrophosphate (PPi) forming two phosphate ions. This Thermoplasma volcanium (strain ATCC 51530 / DSM 4299 / JCM 9571 / NBRC 15438 / GSS1) protein is Inorganic pyrophosphatase.